A 251-amino-acid chain; its full sequence is 3-deoxy-manno-octulosonate cytidylyltransferase (251 aa).

The protein belongs to the KdsB family.

It is found in the cytoplasm. The enzyme catalyses 3-deoxy-alpha-D-manno-oct-2-ulosonate + CTP = CMP-3-deoxy-beta-D-manno-octulosonate + diphosphate. Its pathway is nucleotide-sugar biosynthesis; CMP-3-deoxy-D-manno-octulosonate biosynthesis; CMP-3-deoxy-D-manno-octulosonate from 3-deoxy-D-manno-octulosonate and CTP: step 1/1. It participates in bacterial outer membrane biogenesis; lipopolysaccharide biosynthesis. Activates KDO (a required 8-carbon sugar) for incorporation into bacterial lipopolysaccharide in Gram-negative bacteria. The protein is 3-deoxy-manno-octulosonate cytidylyltransferase of Brucella canis (strain ATCC 23365 / NCTC 10854 / RM-666).